A 764-amino-acid polypeptide reads, in one-letter code: Nucleolar transcription factor 1 (764 aa).

Methionine 1 is modified (N-acetylmethionine). Residues 1–21 (MNGEADCPTDLEMAAPKGQDR) form a disordered region. DNA-binding regions (HMG box) lie at residues 112–180 (PKKP…ARFR) and 196–264 (PEKP…RDYI). Threonine 201 bears the Phosphothreonine mark. 12 positions are modified to phosphoserine: serine 273, serine 336, serine 364, serine 389, serine 412, serine 433, serine 435, serine 484, serine 495, serine 546, serine 584, and serine 638. A DNA-binding region (HMG box 3) is located at residues 298 to 362 (TKPPPNSYSL…DYEVELLRFL (65 aa)). A disordered region spans residues 381 to 411 (NINKKQATSPASKKPAQEGGKGGSEKPKRPV). 3 DNA-binding regions (HMG box) span residues 407 to 475 (PKRP…GGER), 482 to 549 (PESP…SEMR), and 568 to 634 (KKPP…DLWV). The segment at 459–487 (REAALKAQSERKPGGEREERGKLPESPKR) is disordered. Positions 546–576 (SEMRAPPAATNSSKKMKFQGEPKKPPMNGYQ) are disordered. Residues 648 to 764 (YISNKRKSMT…SGDSSDSDSN (117 aa)) form a disordered region. Residues 664–674 (PKSSRTTLQSK) are compositionally biased toward polar residues. Acidic residues predominate over residues 677–745 (SEEDDEEDED…DDDEDEDNES (69 aa)). A compositionally biased stretch (low complexity) spans 746–758 (EGSSSSSSSSGDS).

As to quaternary structure, homodimer. Part of Pol I pre-initiation complex (PIC), in which Pol I core assembles with RRN3 and promoter-bound UTBF and SL1/TIF-IB complex. Interacts with TOP2A in the context of Pol I complex. Interacts with TBP. Interacts with TAF1A. Interacts with RASL11A. Binds to IRS1 and PIK3CA. Interacts with DHX33. Interacts with PHF6. Interacts with CEBPA (isoform 1 and isoform 4). Interacts with DDX11. Interacts with NOP53. Interacts with ALKBH2. In terms of processing, phosphorylated and activated by PIK3CA.

Its subcellular location is the nucleus. It is found in the nucleolus. In terms of biological role, recognizes the ribosomal RNA gene promoter and activates transcription mediated by RNA polymerase I (Pol I) through cooperative interactions with the transcription factor SL1/TIF-IB complex. It binds specifically to the upstream control element and can activate Pol I promoter escape. The protein is Nucleolar transcription factor 1 (UBTF) of Homo sapiens (Human).